Here is a 290-residue protein sequence, read N- to C-terminus: Translin-associated protein X (290 aa).

The segment at Met1–Ser32 is disordered. Basic and acidic residues predominate over residues Asp16–Asp28. An interaction with C1D region spans residues Leu73–Asn208. Mg(2+)-binding residues include Glu129 and Glu197. Lys279 is covalently cross-linked (Glycyl lysine isopeptide (Lys-Gly) (interchain with G-Cter in SUMO2)).

It belongs to the translin family. As to quaternary structure, ring-shaped heterooctamer of six TSN and two TSNAX subunits. Interacts with GOLGA3, TSNAXIP1, SUN1 and AKAP9. Interacts with the homodimeric form of C1D following gamma-radiation. Interacts with TSN and C1D in a mutually exclusive manner. Sumoylated with SUMO1.

It localises to the cytoplasm. The protein localises to the perinuclear region. Its subcellular location is the golgi apparatus. It is found in the nucleus. Its function is as follows. Acts in combination with TSN as an endonuclease involved in the activation of the RNA-induced silencing complex (RISC). Possible role in spermatogenesis. This Pongo abelii (Sumatran orangutan) protein is Translin-associated protein X (TSNAX).